The primary structure comprises 369 residues: P2X receptor B (369 aa).

The Cytoplasmic segment spans residues 1–25 (MTIDWDSILSYNTIKVVRIRDRRLG). The helical transmembrane segment at 26 to 46 (ILHLCFLIVIVLYVVVYSAII) threads the bilayer. The Lumenal portion of the chain corresponds to 47–369 (KKGYVTTEEP…DKLYHNIEAL (323 aa)). Residues 283–296 (RHAIRLIFIQTGVI) are pore-forming motif.

Belongs to the P2X receptor family.

It localises to the contractile vacuole membrane. In terms of biological role, P2X receptors are ATP-gated ion channels that play a role in intracellular calcium signaling. Not required for the purinergic response to extracellular nucleotides. Not essential for osmoregulation. Inward currents are evoked by intracellular ATP and ATP analogs. Insensitive to the P2 receptor antagonists PPADS and suramin, and also copper ions. Inhibited by sodium ions. Permeable to chloride ions. This chain is P2X receptor B (p2xB), found in Dictyostelium discoideum (Social amoeba).